Here is a 256-residue protein sequence, read N- to C-terminus: Protein FixA (256 aa).

This sequence belongs to the ETF beta-subunit/FixA family. Heterodimer of FixA and FixB.

The protein operates within amine and polyamine metabolism; carnitine metabolism. In terms of biological role, required for anaerobic carnitine reduction. May bring reductant to CaiA. This chain is Protein FixA, found in Salmonella paratyphi B (strain ATCC BAA-1250 / SPB7).